The primary structure comprises 545 residues: Phospholipase B-like 1 (545 aa).

The N-terminal stretch at 1-35 (MSRHSQDERLGLPQPPALLPLLLLLLAVAVPLSQA) is a signal peptide. The N-linked (GlcNAc...) (high mannose) asparagine; alternate glycan is linked to Asn-68. Asn-68 carries N-linked (GlcNAc...) (hybrid) asparagine; alternate glycosylation. Residues 206–224 (LSPTKNSSLKFFKRWDMGH) constitute a propeptide, removed in mature form. Residues Asn-305, Asn-363, and Asn-408 are each glycosylated (N-linked (GlcNAc...) (high mannose) asparagine; alternate). 3 N-linked (GlcNAc...) (hybrid) asparagine; alternate glycosylation sites follow: Asn-305, Asn-363, and Asn-408. 2 disulfide bridges follow: Cys-467–Cys-472 and Cys-471–Cys-486. Residue Asn-523 is glycosylated (N-linked (GlcNAc...) (high mannose) asparagine; alternate). Asn-523 carries N-linked (GlcNAc...) (hybrid) asparagine; alternate glycosylation.

The protein belongs to the phospholipase B-like family. May form a homodimer, each monomer is composed of a chain A and a chain B. The maturation cleavages that produces chains A and B are required to open the putative substrate binding pocket. Both chains A and B remain associated in the mature protein.

The protein resides in the lysosome. Functionally, exhibits a weak phospholipase activity, acting on various phospholipids, including phosphatidylcholine, phosphatidylinositol, phosphatidylethanolamine and lysophospholipids. However, in view of the small size of the putative binding pocket, it has been proposed that it may act rather as an amidase or a peptidase. The polypeptide is Phospholipase B-like 1 (PLBD1) (Bos taurus (Bovine)).